The primary structure comprises 256 residues: 1-(5-phosphoribosyl)-5-[(5-phosphoribosylamino)methylideneamino] imidazole-4-carboxamide isomerase (256 aa).

The active-site Proton acceptor is the Asp8. The active-site Proton donor is the Asp129.

Belongs to the HisA/HisF family.

Its subcellular location is the cytoplasm. The catalysed reaction is 1-(5-phospho-beta-D-ribosyl)-5-[(5-phospho-beta-D-ribosylamino)methylideneamino]imidazole-4-carboxamide = 5-[(5-phospho-1-deoxy-D-ribulos-1-ylimino)methylamino]-1-(5-phospho-beta-D-ribosyl)imidazole-4-carboxamide. It functions in the pathway amino-acid biosynthesis; L-histidine biosynthesis; L-histidine from 5-phospho-alpha-D-ribose 1-diphosphate: step 4/9. This chain is 1-(5-phosphoribosyl)-5-[(5-phosphoribosylamino)methylideneamino] imidazole-4-carboxamide isomerase, found in Syntrophobacter fumaroxidans (strain DSM 10017 / MPOB).